Reading from the N-terminus, the 449-residue chain is Methionine aminopeptidase 2 (449 aa).

A disordered region spans residues 1–91 (MAAQAAPELA…PRIPLTTLFP (91 aa)). The segment covering 34–50 (EEAENEGDSDDDRDDEQ) has biased composition (acidic residues). Basic residues predominate over residues 61–75 (KKKKKKRPKKKKKTA). A substrate-binding site is contributed by His-199. Positions 219, 230, and 299 each coordinate a divalent metal cation. His-307 is a binding site for substrate. A divalent metal cation is bound by residues Glu-335 and Glu-430.

It belongs to the peptidase M24A family. Methionine aminopeptidase eukaryotic type 2 subfamily. It depends on Co(2+) as a cofactor. Zn(2+) serves as cofactor. The cofactor is Mn(2+). Requires Fe(2+) as cofactor.

The protein resides in the cytoplasm. It carries out the reaction Release of N-terminal amino acids, preferentially methionine, from peptides and arylamides.. Functionally, cotranslationally removes the N-terminal methionine from nascent proteins. The N-terminal methionine is often cleaved when the second residue in the primary sequence is small and uncharged (Met-Ala-, Cys, Gly, Pro, Ser, Thr, or Val). In Arthroderma benhamiae (strain ATCC MYA-4681 / CBS 112371) (Trichophyton mentagrophytes), this protein is Methionine aminopeptidase 2.